The primary structure comprises 447 residues: Argininosuccinate synthase (447 aa).

Residues 17 to 25 (AFSGGLDTS) and A43 each bind ATP. Y99 contacts L-citrulline. ATP-binding residues include G129 and T131. L-aspartate contacts are provided by T131, N135, and D136. An L-citrulline-binding site is contributed by N135. D136 contacts ATP. The L-citrulline site is built by R139 and S192. An ATP-binding site is contributed by D194. L-citrulline-binding residues include T201, E203, and E280.

This sequence belongs to the argininosuccinate synthase family. Type 2 subfamily. As to quaternary structure, homotetramer.

The protein localises to the cytoplasm. It catalyses the reaction L-citrulline + L-aspartate + ATP = 2-(N(omega)-L-arginino)succinate + AMP + diphosphate + H(+). Its pathway is amino-acid biosynthesis; L-arginine biosynthesis; L-arginine from L-ornithine and carbamoyl phosphate: step 2/3. This is Argininosuccinate synthase (argG) from Salmonella typhi.